Reading from the N-terminus, the 177-residue chain is Large ribosomal subunit protein uL6 (177 aa).

This sequence belongs to the universal ribosomal protein uL6 family. As to quaternary structure, part of the 50S ribosomal subunit.

In terms of biological role, this protein binds to the 23S rRNA, and is important in its secondary structure. It is located near the subunit interface in the base of the L7/L12 stalk, and near the tRNA binding site of the peptidyltransferase center. This Pseudomonas fluorescens (strain Pf0-1) protein is Large ribosomal subunit protein uL6.